The sequence spans 95 residues: MTKISSSDVRKVAQLARLELPEDQIETYTEQLEEILSYVDQLQEIDTKNIPPTTRAVEVVNAMRDDLVEVNCSREDLLNQAPHREGDFFRVPKIL.

Belongs to the GatC family. As to quaternary structure, heterotrimer of A, B and C subunits.

It catalyses the reaction L-glutamyl-tRNA(Gln) + L-glutamine + ATP + H2O = L-glutaminyl-tRNA(Gln) + L-glutamate + ADP + phosphate + H(+). It carries out the reaction L-aspartyl-tRNA(Asn) + L-glutamine + ATP + H2O = L-asparaginyl-tRNA(Asn) + L-glutamate + ADP + phosphate + 2 H(+). In terms of biological role, allows the formation of correctly charged Asn-tRNA(Asn) or Gln-tRNA(Gln) through the transamidation of misacylated Asp-tRNA(Asn) or Glu-tRNA(Gln) in organisms which lack either or both of asparaginyl-tRNA or glutaminyl-tRNA synthetases. The reaction takes place in the presence of glutamine and ATP through an activated phospho-Asp-tRNA(Asn) or phospho-Glu-tRNA(Gln). The polypeptide is Aspartyl/glutamyl-tRNA(Asn/Gln) amidotransferase subunit C (Prochlorococcus marinus (strain NATL2A)).